Reading from the N-terminus, the 117-residue chain is Large ribosomal subunit protein bL20c (117 aa).

Belongs to the bacterial ribosomal protein bL20 family.

It is found in the plastid. The protein resides in the chloroplast. In terms of biological role, binds directly to 23S ribosomal RNA and is necessary for the in vitro assembly process of the 50S ribosomal subunit. It is not involved in the protein synthesizing functions of that subunit. The chain is Large ribosomal subunit protein bL20c from Drimys granadensis.